A 1033-amino-acid polypeptide reads, in one-letter code: MACILCVASLFLSLTKFSIGQREVKIQEGPLYRAEGYPVSIRCTVSGHQGPSTQDFRWSIYLPSAPTKEVQIISTKDAGFSYAVYAQRVQSKEIYIERLQGDSVLLHISKLQMKDAGEYECHTPNTDGKYFGSYSAKTNLTVVPDTLSATMPSQTLSKKEGEPLELTCETTKATVQHTHLSLTWYLMQEGGGSQATEIVSLSKDFVLTPGSSYADRFVAGDVRLDKLGATSFRLSVGKLQPSDQGQVFCEATEWIQDPDETWTLITRKQTDQTALRIQPAARDFTVSITASSSPDEGKPLELVCLAVGRDGNPQLQGVWFLNGKEIAQTDAGGVLDLKRDYRDRASQGQLQVSKLSAQTFSLKIFSVGPEDVGTYSCEVAEVARTQMGSWQVLQRKQSPGYRVQLREPAARSVTVSAEQRTVWEGETLTLLCKAAGDVSALSVSWWLTPQDQSTPVFVAGMGQDGTVQLGVSSPGPAHRGNRRLEKVDWATFRLEIASAMVTDSGTYECRVSERLQNQAKGLQSTQKISVTVKSLKSSLRVNLMSRQPQVMLAHTFHLSCVVRANYSDLKLPFSVTWQFQPAGSGAFHRLIRIAHNGTVEWGDVLSQIHRKTKVSQSFFRSQLQIYDAAMEETGVYRCTVEVYDRDSICTSGPARVSATSNLLMITVTFPESKLSVNSSSQVQELSISSSTQIECAILSRSAGNLPLSIIWYFSSVSANASYLKILEMDQSSVVKYGDEFQTPRSKQKFYSEKVSQDLFLLNILSVEDSDQGHYHCAVEEWLLSTNDTWQKLERKTSGLTELKLRPTGSQVHVSKVNWTGNATEYGEAGFSCSLDGSGSTASLYSVTWYRGRGTATATAAAVANATATITAPAGSQMLVHLQYDGLLQYGREGSRRLQHCYRSSPTDFVLKLHRVEMEDAGIYWCRVTEWQQHGHPGKWINQASGESQRMVLRVLRSEPTVSSLICSSGPLLHFLIVCPFVMLLLLATSFLCLYRKARKLSQLSLSAKKEKALWVGMRKTSLQKEAGEESGHY.

A signal peptide spans 1–20 (MACILCVASLFLSLTKFSIG). Topologically, residues 21–970 (QREVKIQEGP…VSSLICSSGP (950 aa)) are extracellular. Ig-like C2-type domains are found at residues 22–141 (REVK…TNLT), 144–266 (PDTL…TLIT), 279–388 (PAAR…TQMG), 408–529 (PAAR…QKIS), 539–657 (LRVN…ARVS), 670–797 (PESK…RKTS), and 806–941 (PTGS…KWIN). Cys-43 and Cys-121 form a disulfide bridge. A glycan (N-linked (GlcNAc...) asparagine) is linked at Asn-139. Cys-168 and Cys-249 are oxidised to a cystine. Residues 253 to 255 (EWI) carry the EWI motif motif. Intrachain disulfides connect Cys-304/Cys-377, Cys-432/Cys-509, and Cys-560/Cys-638. A glycan (N-linked (GlcNAc...) asparagine) is linked at Asn-677. Disulfide bonds link Cys-695-Cys-776 and Cys-832-Cys-925. The helical transmembrane segment at 971–991 (LLHFLIVCPFVMLLLLATSFL) threads the bilayer. The Cytoplasmic portion of the chain corresponds to 992–1033 (CLYRKARKLSQLSLSAKKEKALWVGMRKTSLQKEAGEESGHY).

In terms of processing, N-glycosylated.

The protein resides in the membrane. Functionally, plays a role as inhibitor of T-cells proliferation induced by CD3. Inhibits expression of IL2RA on activated T-cells and secretion of IL2. Inhibits tyrosine kinases that are required for IL2 production and cellular proliferation. Inhibits phospholipase C-gamma-1/PLCG1 phosphorylation and subsequent CD3-induced changes in intracellular free calcium. Prevents nuclear translocation of nuclear factor of activated T-cell to the nucleus. Plays a role in the inhibition of T-cell proliferation via IL10 secretion by cutaneous dendritic cells. This chain is Immunoglobulin superfamily member 2 (Cd101), found in Mus musculus (Mouse).